Here is a 281-residue protein sequence, read N- to C-terminus: NAD kinase (281 aa).

Asp61 acts as the Proton acceptor in catalysis. Residues 61–62, 134–135, Arg145, Asp164, 175–180, and Gln234 each bind NAD(+); these read DG, ND, and TAYSLS.

Belongs to the NAD kinase family. Requires a divalent metal cation as cofactor.

The protein localises to the cytoplasm. The catalysed reaction is NAD(+) + ATP = ADP + NADP(+) + H(+). Involved in the regulation of the intracellular balance of NAD and NADP, and is a key enzyme in the biosynthesis of NADP. Catalyzes specifically the phosphorylation on 2'-hydroxyl of the adenosine moiety of NAD to yield NADP. This is NAD kinase from Clostridium botulinum (strain 657 / Type Ba4).